Here is a 553-residue protein sequence, read N- to C-terminus: Dihydroxy-acid dehydratase (553 aa).

Position 78 (D78) interacts with Mg(2+). C119 serves as a coordination point for [2Fe-2S] cluster. Residues D120 and K121 each contribute to the Mg(2+) site. K121 is subject to N6-carboxylysine. Position 193 (C193) interacts with [2Fe-2S] cluster. Residue E441 participates in Mg(2+) binding. S467 acts as the Proton acceptor in catalysis.

Belongs to the IlvD/Edd family. Homodimer. It depends on [2Fe-2S] cluster as a cofactor. The cofactor is Mg(2+).

The enzyme catalyses (2R)-2,3-dihydroxy-3-methylbutanoate = 3-methyl-2-oxobutanoate + H2O. It carries out the reaction (2R,3R)-2,3-dihydroxy-3-methylpentanoate = (S)-3-methyl-2-oxopentanoate + H2O. It participates in amino-acid biosynthesis; L-isoleucine biosynthesis; L-isoleucine from 2-oxobutanoate: step 3/4. The protein operates within amino-acid biosynthesis; L-valine biosynthesis; L-valine from pyruvate: step 3/4. In terms of biological role, functions in the biosynthesis of branched-chain amino acids. Catalyzes the dehydration of (2R,3R)-2,3-dihydroxy-3-methylpentanoate (2,3-dihydroxy-3-methylvalerate) into 2-oxo-3-methylpentanoate (2-oxo-3-methylvalerate) and of (2R)-2,3-dihydroxy-3-methylbutanoate (2,3-dihydroxyisovalerate) into 2-oxo-3-methylbutanoate (2-oxoisovalerate), the penultimate precursor to L-isoleucine and L-valine, respectively. The protein is Dihydroxy-acid dehydratase of Geobacter metallireducens (strain ATCC 53774 / DSM 7210 / GS-15).